Consider the following 197-residue polypeptide: Peptide deformylase (197 aa).

2 residues coordinate Fe cation: C106 and H148. E149 is an active-site residue. Fe cation is bound at residue H152.

This sequence belongs to the polypeptide deformylase family. It depends on Fe(2+) as a cofactor.

The catalysed reaction is N-terminal N-formyl-L-methionyl-[peptide] + H2O = N-terminal L-methionyl-[peptide] + formate. Functionally, removes the formyl group from the N-terminal Met of newly synthesized proteins. Requires at least a dipeptide for an efficient rate of reaction. N-terminal L-methionine is a prerequisite for activity but the enzyme has broad specificity at other positions. The sequence is that of Peptide deformylase from Mycolicibacterium paratuberculosis (strain ATCC BAA-968 / K-10) (Mycobacterium paratuberculosis).